The primary structure comprises 106 residues: Toxin-like structure LSTX-D5 (106 aa).

The first 20 residues, 1 to 20, serve as a signal peptide directing secretion; it reads MMKVLVVVALLVTLISYSSS. The propeptide occupies 21-41; that stretch reads EGIDDLETDELLSLMANEQTR. Intrachain disulfides connect Cys45–Cys60, Cys52–Cys69, Cys59–Cys85, and Cys71–Cys83.

This sequence belongs to the neurotoxin 19 (CSTX) family. 02 (D7) subfamily. Expressed by the venom gland.

It is found in the secreted. This Lycosa singoriensis (Wolf spider) protein is Toxin-like structure LSTX-D5.